The primary structure comprises 1229 residues: DNA-directed RNA polymerase subunit beta (1229 aa).

A disordered region spans residues 1175-1229 (ESIDEDEQPQGLGAFERGLEEVENGEEDDDKEKFYEDLMDASQEQDESADDDIDE). Acidic residues-rich tracts occupy residues 1195–1204 (EVENGEEDDD) and 1211–1229 (DLMD…DIDE).

Belongs to the RNA polymerase beta chain family. The RNAP catalytic core consists of 2 alpha, 1 beta, 1 beta' and 1 omega subunit. When a sigma factor is associated with the core the holoenzyme is formed, which can initiate transcription.

The enzyme catalyses RNA(n) + a ribonucleoside 5'-triphosphate = RNA(n+1) + diphosphate. Functionally, DNA-dependent RNA polymerase catalyzes the transcription of DNA into RNA using the four ribonucleoside triphosphates as substrates. The sequence is that of DNA-directed RNA polymerase subunit beta from Caldicellulosiruptor saccharolyticus (strain ATCC 43494 / DSM 8903 / Tp8T 6331).